Reading from the N-terminus, the 294-residue chain is MVLNHSHIVRLYLIKVMCQLLGMNCNTPTDIVFSFEGFRRRAGLTDCHSDGFGIAFFEGRGVRIFRDNQAASLSPIADCIKQYNIKSLNVIAHIRKATQGEVNIENTHPFIREIWGQNWVFAHNGNLKNLPDMTDHFLQPIGSTDSEAAFCYMAEYLKNTFRKKPSEMEIFEAIQKVTKGLAQHGTFNFILSNGEWMIAHCSTNLHYVMRKAPFGKAHRIDDDGVIDFSYYAKAGDKVNIITTFPLTKNESWTKMENGGFVFFKNGEKIAEVIGTPKEAIDDGTLGNRTINSAI.

The active site involves C18. The 249-residue stretch at 18-266 folds into the Glutamine amidotransferase type-2 domain; that stretch reads CQLLGMNCNT…NGGFVFFKNG (249 aa).

This Haemophilus influenzae (strain ATCC 51907 / DSM 11121 / KW20 / Rd) protein is Putative glutamine amidotransferase HI_1037.